Here is a 291-residue protein sequence, read N- to C-terminus: Early E4 34 kDa protein (291 aa).

It belongs to the adenoviridae E4 30 to 34 kDa protein family. In terms of assembly, interacts with E1B-55k.

Its subcellular location is the host nucleus. It localises to the host cytoplasm. Its function is as follows. Plays a major role to prevent cellular inhibition of viral genome replication by nuclear bodies. Assembles an SCF-like E3 ubiquitin ligase complex based on the cellular proteins ELOB, ELOC, CUL5 and RBX1, in cooperation with viral E1B-55K. This viral RING-type ligase ubiquitinates cellular substrates prior to proteasomal degradation: p53/TP53, LIG4, MRE11-RAD50-NBS1 (MRN) complex, ITGA3, DAXX and BLM. The polypeptide is Early E4 34 kDa protein (Homo sapiens (Human)).